Here is a 371-residue protein sequence, read N- to C-terminus: Dual-specificity RNA methyltransferase RlmN (371 aa).

Residue Glu-92 is the Proton acceptor of the active site. The 240-residue stretch at 98–337 folds into the Radical SAM core domain; the sequence is EADRATLCVS…VTVRKTRGDD (240 aa). Cys-105 and Cys-342 are oxidised to a cystine. [4Fe-4S] cluster is bound by residues Cys-112, Cys-116, and Cys-119. S-adenosyl-L-methionine is bound by residues 166–167, Ser-198, 220–222, and Asn-299; these read GE and SLH. Cys-342 serves as the catalytic S-methylcysteine intermediate.

The protein belongs to the radical SAM superfamily. RlmN family. It depends on [4Fe-4S] cluster as a cofactor.

The protein resides in the cytoplasm. The catalysed reaction is adenosine(2503) in 23S rRNA + 2 reduced [2Fe-2S]-[ferredoxin] + 2 S-adenosyl-L-methionine = 2-methyladenosine(2503) in 23S rRNA + 5'-deoxyadenosine + L-methionine + 2 oxidized [2Fe-2S]-[ferredoxin] + S-adenosyl-L-homocysteine. It carries out the reaction adenosine(37) in tRNA + 2 reduced [2Fe-2S]-[ferredoxin] + 2 S-adenosyl-L-methionine = 2-methyladenosine(37) in tRNA + 5'-deoxyadenosine + L-methionine + 2 oxidized [2Fe-2S]-[ferredoxin] + S-adenosyl-L-homocysteine. In terms of biological role, specifically methylates position 2 of adenine 2503 in 23S rRNA and position 2 of adenine 37 in tRNAs. m2A2503 modification seems to play a crucial role in the proofreading step occurring at the peptidyl transferase center and thus would serve to optimize ribosomal fidelity. In Actinobacillus succinogenes (strain ATCC 55618 / DSM 22257 / CCUG 43843 / 130Z), this protein is Dual-specificity RNA methyltransferase RlmN.